The following is a 241-amino-acid chain: Small ribosomal subunit protein uS2c (241 aa).

Belongs to the universal ribosomal protein uS2 family.

The protein resides in the plastid. It localises to the chloroplast. In Porphyra purpurea (Red seaweed), this protein is Small ribosomal subunit protein uS2c (rps2).